Consider the following 449-residue polypeptide: Probable phosphoglucosamine mutase (449 aa).

The active-site Phosphoserine intermediate is serine 96. Residues serine 96, aspartate 233, aspartate 235, and aspartate 237 each coordinate Mg(2+). Position 96 is a phosphoserine (serine 96).

The protein belongs to the phosphohexose mutase family. Mg(2+) serves as cofactor. In terms of processing, activated by phosphorylation.

The enzyme catalyses alpha-D-glucosamine 1-phosphate = D-glucosamine 6-phosphate. Catalyzes the conversion of glucosamine-6-phosphate to glucosamine-1-phosphate. Does not display phosphoglucomutase (PGM) or phosphomannomutase (PMM) activities. The polypeptide is Probable phosphoglucosamine mutase (glmM) (Thermococcus kodakarensis (strain ATCC BAA-918 / JCM 12380 / KOD1) (Pyrococcus kodakaraensis (strain KOD1))).